The sequence spans 128 residues: Nanos homolog 1 (128 aa).

The interval 7–23 is essential for its translational repressor activity; sequence FNSWSDYLGLSSLISRG. The interval 23 to 58 is disordered; the sequence is GLQPREGGESPRPRWKASSPTPAEPLPSKAAEAHGH. The Nanos-type zinc-finger motif lies at 60-114; sequence GCGFCRSNREAQSLYSSHRLRAPDGRVLCPVLRGYTCPLCGANGDWAHTMRYCPL. Residues Cys61, Cys64, His77, Cys88, Cys96, Cys99, His107, and Cys112 each coordinate Zn(2+). 2 short sequence motifs (C2HC) span residues 61 to 88 and 96 to 112; these read CGFCRSNREAQSLYSSHRLRAPDGRVLC and CPLCGANGDWAHTMRYC.

It belongs to the nanos family. Interacts with ccnb1.

Its subcellular location is the cytoplasm. It is found in the perinuclear region. Its function is as follows. Acts as a translational repressor. Can mediate repression affecting different steps in the translation process: cap-driven, IRES-driven, polyadenylated RNAs or nonpolyadenylated RNAs. Essential for the development of primordial germ cells (PGCs) by ensuring their proper migration and survival. The sequence is that of Nanos homolog 1 (nanos1) from Xenopus tropicalis (Western clawed frog).